The following is a 538-amino-acid chain: Syncytin-2 (538 aa).

The N-terminal stretch at 1–15 (MGLLLLVLILTPLLA) is a signal peptide. Residues 16 to 478 (AHRHPDFPLL…GWLNWEGTWK (463 aa)) lie on the Extracellular side of the membrane. The CXXC motif lies at 43–46 (CWLC). 3 disulfide bridges follow: Cys43-Cys46, Cys43-Cys439, and Cys431-Cys438. 8 N-linked (GlcNAc...) asparagine glycosylation sites follow: Asn133, Asn146, Asn177, Asn220, Asn241, Asn247, Asn312, and Asn332. The segment at 354–374 (FIPLLAGLGIIAGTGTGIAGI) is fusion peptide. The short motif at 414 to 430 (LQNRRGLDMLTAAQGGI) is the CKS-17 element. Positions 431-439 (CLALDEKCC) match the CX6CC motif. Asn443 carries N-linked (GlcNAc...) asparagine glycosylation. A helical membrane pass occupies residues 479–499 (WFSWVLPFTGPLVSLLLLLLF). Residues 500–538 (GPCLLNLITQFVLSRLQAIKLQTNLSAGCRPHNIQESPF) are Cytoplasmic-facing.

It belongs to the gamma type-C retroviral envelope protein family. HERV class-I FRD env subfamily. The surface and transmembrane proteins form a heterodimer. They are attached by non-covalent interactions or by a labile interchain disulfide bond. Specific enzymatic cleavages in vivo yield the mature SU and TM proteins. Post-translationally, the CXXC motif is highly conserved across a broad range of retroviral envelope proteins. It is thought to participate in the formation of a labile disulfide bond possibly with the CX6CC motif present in the transmembrane protein.

The protein resides in the virion. It localises to the cell membrane. In terms of biological role, this endogenous retroviral envelope protein has retained its original fusogenic properties and participates in trophoblast fusion and the formation of a syncytium during placenta morphogenesis. The interaction with MFSD2A is apparently important for this process. Functionally, endogenous envelope proteins may have kept, lost or modified their original function during evolution but this one can still make pseudotypes with MLV, HIV-1 or SIV-1 virions and confer infectivity. Retroviral envelope proteins mediate receptor recognition and membrane fusion during early infection. The surface protein mediates receptor recognition, while the transmembrane protein anchors the envelope heterodimer to the viral membrane through one transmembrane domain. The other hydrophobic domain, called fusion peptide, mediates fusion of the viral membrane with the target cell membrane. This Pongo pygmaeus (Bornean orangutan) protein is Syncytin-2 (ERVFRD-1).